The primary structure comprises 299 residues: Oxygen-dependent coproporphyrinogen-III oxidase (299 aa).

Serine 92 contributes to the substrate binding site. Mn(2+) contacts are provided by histidine 96 and histidine 106. Histidine 106 functions as the Proton donor in the catalytic mechanism. Position 108–110 (108–110 (NVR)) interacts with substrate. The Mn(2+) site is built by histidine 145 and histidine 175. Residues 240 to 275 (YVEFNLVWDRGTLFGLQTGGRTESILMSMPPLVRWE) form an important for dimerization region. 258-260 (GGR) serves as a coordination point for substrate.

The protein belongs to the aerobic coproporphyrinogen-III oxidase family. In terms of assembly, homodimer. It depends on Mn(2+) as a cofactor.

It localises to the cytoplasm. It carries out the reaction coproporphyrinogen III + O2 + 2 H(+) = protoporphyrinogen IX + 2 CO2 + 2 H2O. It participates in porphyrin-containing compound metabolism; protoporphyrin-IX biosynthesis; protoporphyrinogen-IX from coproporphyrinogen-III (O2 route): step 1/1. Functionally, involved in the heme biosynthesis. Catalyzes the aerobic oxidative decarboxylation of propionate groups of rings A and B of coproporphyrinogen-III to yield the vinyl groups in protoporphyrinogen-IX. The sequence is that of Oxygen-dependent coproporphyrinogen-III oxidase from Escherichia coli O17:K52:H18 (strain UMN026 / ExPEC).